Consider the following 314-residue polypeptide: Probable cell division protein WhiA (314 aa).

Residues 274–305 (SLAELGDRLEISKSGANHRMRKLKALEDMINA) constitute a DNA-binding region (H-T-H motif).

It belongs to the WhiA family.

Functionally, involved in cell division and chromosome segregation. The sequence is that of Probable cell division protein WhiA from Leuconostoc citreum (strain KM20).